The sequence spans 37 residues: Large ribosomal subunit protein bL36 (37 aa).

It belongs to the bacterial ribosomal protein bL36 family.

The protein is Large ribosomal subunit protein bL36 of Desulforamulus reducens (strain ATCC BAA-1160 / DSM 100696 / MI-1) (Desulfotomaculum reducens).